Reading from the N-terminus, the 401-residue chain is Ornithine aminotransferase (401 aa).

At Lys258 the chain carries N6-(pyridoxal phosphate)lysine.

The protein belongs to the class-III pyridoxal-phosphate-dependent aminotransferase family. OAT subfamily. Pyridoxal 5'-phosphate is required as a cofactor.

It is found in the cytoplasm. It catalyses the reaction a 2-oxocarboxylate + L-ornithine = L-glutamate 5-semialdehyde + an L-alpha-amino acid. The protein operates within amino-acid biosynthesis; L-proline biosynthesis; L-glutamate 5-semialdehyde from L-ornithine: step 1/1. In terms of biological role, catalyzes the interconversion of ornithine to glutamate semialdehyde. The chain is Ornithine aminotransferase from Bacillus subtilis (strain 168).